The following is a 919-amino-acid chain: MFS-type transporter clz9 (919 aa).

A compositionally biased stretch (polar residues) spans 1–11; it reads MAASTKPTTKL. A disordered region spans residues 1–33; that stretch reads MAASTKPTTKLSTEEDDVSRRDSESSADFMKSN. The chain crosses the membrane as a helical span at residues 69–89; the sequence is VVASFAAAISPFSTSTYYPVV. An N-linked (GlcNAc...) asparagine glycan is attached at asparagine 104. The next 3 membrane-spanning stretches (helical) occupy residues 132-152, 192-212, and 222-242; these read PMFL…ALQN, LIYA…IGGL, and VFWF…IFFG. Asparagine 260 carries an N-linked (GlcNAc...) asparagine glycan. Transmembrane regions (helical) follow at residues 303-323, 333-353, 393-413, and 418-438; these read FILS…TSVL, YDAV…LLAY, LGFV…YGWQ, and APLA…TGVM. Residue asparagine 461 is glycosylated (N-linked (GlcNAc...) asparagine). Residues 465 to 485 traverse the membrane as a helical segment; that stretch reads LLLGAGAVAVVGPLNKSAGIG. A DDE-1 domain is found at 641 to 809; sequence REWVTLIQGI…FTSANICSSF (169 aa). Positions 840 to 897 are disordered; it reads EAPWEAKTPSNRKKKQIQKRGTLTKGEGEDTLAQKEADQQIEREQRQGGEQSGRSRQA. The span at 865–886 shows a compositional bias: basic and acidic residues; the sequence is GEGEDTLAQKEADQQIEREQRQ. Positions 887 to 896 are enriched in low complexity; sequence GGEQSGRSRQ. Asparagine 915 carries an N-linked (GlcNAc...) asparagine glycan.

The protein belongs to the major facilitator superfamily. CAR1 family.

The protein localises to the membrane. Functionally, MFS-type transporter; part of the gene cluster that mediates the biosynthesis of squalestatin S1 (SQS1, also known as zaragozic acid A), a heavily oxidized fungal polyketide that offers potent cholesterol lowering activity by targeting squalene synthase (SS). The protein is MFS-type transporter clz9 of Cochliobolus lunatus (Filamentous fungus).